The following is a 1334-amino-acid chain: MKKPYTIGLDIGTNSVGWAVLTDQYDLVKRKMKIAGDSEKKQIKKNFWGVRLFDEGQTAADRRMARTARRRIERRRNRISYLQGIFAEEMSKTDANFFCRLSDSFYVDNEKRNSRHPFFATIEEEVEYHKNYPTIYHLREELVNSSEKADLRLVYLALAHIIKYRGNFLIEGALDTQNTSVDGIYKQFIQTYNQVFASGIEDGSLKKLEDNKDVAKILVEKVTRKEKLERILKLYPGEKSAGMFAQFISLIVGSKGNFQKPFDLIEKSDIECAKDSYEEDLESLLALIGDEYAELFVAAKNAYSAVVLSSIITVAETETNAKLSASMIERFDTHEEDLGELKAFIKLHLPKHYEEIFSNTEKHGYAGYIDGKTKQADFYKYMKMTLENIEGADYFIAKIEKENFLRKQRTFDNGAIPHQLHLEELEAILHQQAKYYPFLKENYDKIKSLVTFRIPYFVGPLANGQSEFAWLTRKADGEIRPWNIEEKVDFGKSAVDFIEKMTNKDTYLPKENVLPKHSLCYQKYLVYNELTKVRYINDQGKTSYFSGQEKEQIFNDLFKQKRKVKKKDLELFLRNMSHVESPTIEGLEDSFNSSYSTYHDLLKVGIKQEILDNPVNTEMLENIVKILTVFEDKRMIKEQLQQFSDVLDGVVLKKLERRHYTGWGRLSAKLLMGIRDKQSHLTILDYLMNDDGLNRNLMQLINDSNLSFKSIIEKEQVTTADKDIQSIVADLAGSPAIKKGILQSLKIVDELVSVMGYPPQTIVVEMARENQTTGKGKNNSRPRYKSLEKAIKEFGSQILKEHPTDNQELRNNRLYLYYLQNGKDMYTGQDLDIHNLSNYDIDHIVPQSFITDNSIDNLVLTSSAGNREKGDDVPPLEIVRKRKVFWEKLYQGNLMSKRKFDYLTKAERGGLTEADKARFIHRQLVETRQITKNVANILHQRFNYEKDDHGNTMKQVRIVTLKSALVSQFRKQFQLYKVRDVNDYHHAHDAYLNGVVANTLLKVYPQLEPEFVYGDYHQFDWFKANKATAKKQFYTNIMLFFAQKDRIIDENGEILWDKKYLDTVKKVMSYRQMNIVKKTEIQKGEFSKATIKPKGNSSKLIPRKTNWDPMKYGGLDSPNMAYAVVIEYAKGKNKLVFEKKIIRVTIMERKAFEKDEKAFLEEQGYRQPKVLAKLPKYTLYECEEGRRRMLASANEAQKGNQQVLPNHLVTLLHHAANCEVSDGKSLDYIESNREMFAELLAHVSEFAKRYTLAEANLNKINQLFEQNKEGDIKAIAQSFVDLMAFNAMGAPASFKFFETTIERKRYNNLKELLNSTIIYQSITGLYESRKRLDD.

Asp10 functions as the For RuvC-like nuclease domain in the catalytic mechanism. Positions 10, 765, and 769 each coordinate Mn(2+). An HNH Cas9-type domain is found at 773-924 (TGKGKNNSRP…DKARFIHRQL (152 aa)). Catalysis depends on His843, which acts as the Proton acceptor for HNH nuclease domain. A Mn(2+)-binding site is contributed by His986.

Belongs to the CRISPR-associated protein Cas9 family. Subtype II-A subfamily. Monomer. Binds crRNA and tracrRNA. Mg(2+) is required as a cofactor.

Its function is as follows. CRISPR (clustered regularly interspaced short palindromic repeat) is an adaptive immune system that provides protection against mobile genetic elements (viruses, transposable elements and conjugative plasmids). CRISPR clusters contain spacers, sequences complementary to antecedent mobile elements, and target invading nucleic acids. CRISPR clusters are transcribed and processed into CRISPR RNA (crRNA). In type II CRISPR systems correct processing of pre-crRNA requires a trans-encoded small RNA (tracrRNA), endogenous ribonuclease 3 (rnc) and this protein. The tracrRNA serves as a guide for ribonuclease 3-aided processing of pre-crRNA. Subsequently Cas9/crRNA/tracrRNA endonucleolytically cleaves linear or circular dsDNA target complementary to the spacer; Cas9 is inactive in the absence of the 2 guide RNAs (gRNA). Cas9 recognizes the protospacer adjacent motif (PAM) in the CRISPR repeat sequences to help distinguish self versus nonself, as targets within the bacterial CRISPR locus do not have PAMs. PAM recognition is also required for catalytic activity. In Listeria innocua serovar 6a (strain ATCC BAA-680 / CLIP 11262), this protein is CRISPR-associated endonuclease Cas9.